Consider the following 491-residue polypeptide: Aspartyl/glutamyl-tRNA(Asn/Gln) amidotransferase subunit B (491 aa).

The protein belongs to the GatB/GatE family. GatB subfamily. As to quaternary structure, heterotrimer of A, B and C subunits.

The catalysed reaction is L-glutamyl-tRNA(Gln) + L-glutamine + ATP + H2O = L-glutaminyl-tRNA(Gln) + L-glutamate + ADP + phosphate + H(+). It catalyses the reaction L-aspartyl-tRNA(Asn) + L-glutamine + ATP + H2O = L-asparaginyl-tRNA(Asn) + L-glutamate + ADP + phosphate + 2 H(+). Allows the formation of correctly charged Asn-tRNA(Asn) or Gln-tRNA(Gln) through the transamidation of misacylated Asp-tRNA(Asn) or Glu-tRNA(Gln) in organisms which lack either or both of asparaginyl-tRNA or glutaminyl-tRNA synthetases. The reaction takes place in the presence of glutamine and ATP through an activated phospho-Asp-tRNA(Asn) or phospho-Glu-tRNA(Gln). This is Aspartyl/glutamyl-tRNA(Asn/Gln) amidotransferase subunit B from Prochlorococcus marinus (strain NATL1A).